A 289-amino-acid chain; its full sequence is ATP phosphoribosyltransferase (289 aa).

Belongs to the ATP phosphoribosyltransferase family. Long subfamily. Mg(2+) serves as cofactor.

It is found in the cytoplasm. The catalysed reaction is 1-(5-phospho-beta-D-ribosyl)-ATP + diphosphate = 5-phospho-alpha-D-ribose 1-diphosphate + ATP. Its pathway is amino-acid biosynthesis; L-histidine biosynthesis; L-histidine from 5-phospho-alpha-D-ribose 1-diphosphate: step 1/9. Feedback inhibited by histidine. Its function is as follows. Catalyzes the condensation of ATP and 5-phosphoribose 1-diphosphate to form N'-(5'-phosphoribosyl)-ATP (PR-ATP). Has a crucial role in the pathway because the rate of histidine biosynthesis seems to be controlled primarily by regulation of HisG enzymatic activity. The chain is ATP phosphoribosyltransferase from Pelotomaculum thermopropionicum (strain DSM 13744 / JCM 10971 / SI).